Reading from the N-terminus, the 217-residue chain is Pyrophosphatase PpaX (217 aa).

Asp-11 functions as the Nucleophile in the catalytic mechanism.

This sequence belongs to the HAD-like hydrolase superfamily. PpaX family. Mg(2+) serves as cofactor.

The catalysed reaction is diphosphate + H2O = 2 phosphate + H(+). Hydrolyzes pyrophosphate formed during P-Ser-HPr dephosphorylation by HPrK/P. Might play a role in controlling the intracellular pyrophosphate pool. This is Pyrophosphatase PpaX from Listeria monocytogenes serotype 4b (strain CLIP80459).